The primary structure comprises 532 residues: FRIGIDA-like protein 4a (532 aa).

Residues Lys406–Ala432 form a disordered region.

The protein belongs to the Frigida family. Expressed in leaves, shoot apex, flowers and during seed development.

In Arabidopsis thaliana (Mouse-ear cress), this protein is FRIGIDA-like protein 4a (FRL4A).